Here is a 424-residue protein sequence, read N- to C-terminus: Enolase (424 aa).

Glutamine 162 contacts (2R)-2-phosphoglycerate. Residue glutamate 204 is the Proton donor of the active site. 3 residues coordinate Mg(2+): aspartate 241, glutamate 284, and aspartate 311. Residues lysine 336, arginine 365, serine 366, and lysine 387 each coordinate (2R)-2-phosphoglycerate. Lysine 336 (proton acceptor) is an active-site residue.

It belongs to the enolase family. Mg(2+) is required as a cofactor.

Its subcellular location is the cytoplasm. The protein localises to the secreted. The protein resides in the cell surface. It carries out the reaction (2R)-2-phosphoglycerate = phosphoenolpyruvate + H2O. It functions in the pathway carbohydrate degradation; glycolysis; pyruvate from D-glyceraldehyde 3-phosphate: step 4/5. Its function is as follows. Catalyzes the reversible conversion of 2-phosphoglycerate (2-PG) into phosphoenolpyruvate (PEP). It is essential for the degradation of carbohydrates via glycolysis. The chain is Enolase from Sinorhizobium medicae (strain WSM419) (Ensifer medicae).